Consider the following 136-residue polypeptide: uncharacterized protein (136 aa).

This is an uncharacterized protein from Fowl adenovirus A serotype 1 (strain CELO / Phelps) (FAdV-1).